A 178-amino-acid polypeptide reads, in one-letter code: ATP synthase subunit delta (178 aa).

The protein belongs to the ATPase delta chain family. As to quaternary structure, F-type ATPases have 2 components, F(1) - the catalytic core - and F(0) - the membrane proton channel. F(1) has five subunits: alpha(3), beta(3), gamma(1), delta(1), epsilon(1). F(0) has three main subunits: a(1), b(2) and c(10-14). The alpha and beta chains form an alternating ring which encloses part of the gamma chain. F(1) is attached to F(0) by a central stalk formed by the gamma and epsilon chains, while a peripheral stalk is formed by the delta and b chains.

It is found in the cell membrane. F(1)F(0) ATP synthase produces ATP from ADP in the presence of a proton or sodium gradient. F-type ATPases consist of two structural domains, F(1) containing the extramembraneous catalytic core and F(0) containing the membrane proton channel, linked together by a central stalk and a peripheral stalk. During catalysis, ATP synthesis in the catalytic domain of F(1) is coupled via a rotary mechanism of the central stalk subunits to proton translocation. In terms of biological role, this protein is part of the stalk that links CF(0) to CF(1). It either transmits conformational changes from CF(0) to CF(1) or is implicated in proton conduction. This chain is ATP synthase subunit delta, found in Streptococcus pyogenes serotype M3 (strain SSI-1).